The following is a 56-amino-acid chain: Large ribosomal subunit protein bL33 (56 aa).

Belongs to the bacterial ribosomal protein bL33 family.

The sequence is that of Large ribosomal subunit protein bL33 (rpmG) from Treponema pallidum (strain Nichols).